Consider the following 884-residue polypeptide: Lon protease homolog 2, peroxisomal (884 aa).

Positions 12–255 constitute a Lon N-terminal domain; it reads LAILPFRNKV…KATELVDRHL (244 aa). The interval 67-101 is disordered; sequence SLLSPGVGSDSGEGGSKAPGGSAGESTKQDTKNGK. Gly residues predominate over residues 75–89; sequence SDSGEGGSKAPGGSA. 408–415 is an ATP binding site; that stretch reads GPPGVGKT. Residues 689-874 enclose the Lon proteolytic domain; it reads VASPGVSVGL…EEVLDHAFEG (186 aa). Residues Ser780 and Lys823 contribute to the active site. The short motif at 882–884 is the Microbody targeting signal element; sequence SKL.

Belongs to the peptidase S16 family.

Its subcellular location is the peroxisome matrix. It catalyses the reaction Hydrolysis of proteins in presence of ATP.. Functionally, ATP-dependent serine protease that mediates the selective degradation of misfolded and unassembled polypeptides in the peroxisomal matrix. Necessary for type 2 peroxisome targeting signal (PTS2)-containing protein processing and facilitates peroxisome matrix protein import. This is Lon protease homolog 2, peroxisomal from Oryza sativa subsp. japonica (Rice).